A 164-amino-acid polypeptide reads, in one-letter code: MEAPRGNLRAVALIAGDNNVRGCLQFVQDISGTTHVTGKISGLSPGFHGFHIHSFGDTTNGCISTGPHFNPLNRVHGPPNEEERHAGDLGNILAGSNGVAEILIKDKHIPLSGQYSILGRAVVVHADPDDLGKGGHKLSKSTGNAGSRVGCGIIGLQSSADAKL.

Positions 51, 53, and 68 each coordinate Cu cation. Cys62 and Cys151 form a disulfide bridge. Zn(2+) is bound by residues His68, His76, His85, and Asp88. Residue His125 coordinates Cu cation. The Peroxisome localization signal motif lies at 162–164 (AKL).

Belongs to the Cu-Zn superoxide dismutase family. As to quaternary structure, homodimer. Cu cation is required as a cofactor. Requires Zn(2+) as cofactor. In terms of tissue distribution, expressed in leaves (at protein level).

The protein localises to the peroxisome. The enzyme catalyses 2 superoxide + 2 H(+) = H2O2 + O2. Functionally, destroys radicals which are normally produced within the cells and which are toxic to biological systems. This is Superoxide dismutase [Cu-Zn] 3 (CSD3) from Arabidopsis thaliana (Mouse-ear cress).